The chain runs to 399 residues: Probable sugar efflux transporter (399 aa).

The next 12 membrane-spanning stretches (helical) occupy residues 15–35, 50–70, 81–101, 103–123, 136–156, 168–188, 209–229, 246–266, 273–293, 301–321, 333–353, and 364–384; these read VVTLAIAAFIFNTTEFAPVGL, VGMMLTIYAWVVALMSLPFML, LIGLFILFIASHVLSFFAWSF, VLVISRIGIAFAHAVFWSITS, AQALSLIATGTALAMVFGIPI, MTFLAIGLGALATLACLVKLL, PALVSVYILTVVVVTAHYTAY, FATVLLLILGGAGIIGSILFG, ASGLISIAIGLLLACLLLLLP, LMLLSIFWGVAIMIIGLGMQV, VAMSLFSGIFNIGIGAGALVG, and SIGYIGAIPALAALVWSLMIF.

This sequence belongs to the major facilitator superfamily. SotB (TC 2.A.1.2) family.

The protein resides in the cell inner membrane. Its function is as follows. Involved in the efflux of sugars. The physiological role may be the reduction of the intracellular concentration of toxic sugars or sugar metabolites. The sequence is that of Probable sugar efflux transporter from Klebsiella pneumoniae (strain 342).